The chain runs to 158 residues: Ribosome maturation factor RimP (158 aa).

This sequence belongs to the RimP family.

Its subcellular location is the cytoplasm. Required for maturation of 30S ribosomal subunits. This is Ribosome maturation factor RimP from Pseudomonas savastanoi pv. phaseolicola (strain 1448A / Race 6) (Pseudomonas syringae pv. phaseolicola (strain 1448A / Race 6)).